Here is a 692-residue protein sequence, read N- to C-terminus: UvrABC system protein C (692 aa).

The GIY-YIG domain maps to 16–95 (ETPGVYRFRD…IKEFDPRFNV (80 aa)). In terms of domain architecture, UVR spans 208–243 (GRYLRRLEREMRAAAEAQEYERAARLRDDIGALRRA). Residues 492-511 (GELEEYPGAPTGDDEAPETG) are disordered.

It belongs to the UvrC family. As to quaternary structure, interacts with UvrB in an incision complex.

The protein localises to the cytoplasm. The UvrABC repair system catalyzes the recognition and processing of DNA lesions. UvrC both incises the 5' and 3' sides of the lesion. The N-terminal half is responsible for the 3' incision and the C-terminal half is responsible for the 5' incision. The chain is UvrABC system protein C from Parafrankia sp. (strain EAN1pec).